Reading from the N-terminus, the 111-residue chain is Large ribosomal subunit protein P2B (111 aa).

The tract at residues 62-111 is disordered; sequence LASVPSGGAAAGGASASTGAAAGGAAEAEEEKEEEAKEESDDDMGFGLFD. Residues 67–87 are compositionally biased toward low complexity; sequence SGGAAAGGASASTGAAAGGAA. The span at 88-105 shows a compositional bias: acidic residues; it reads EAEEEKEEEAKEESDDDM. Position 101 is a phosphoserine (S101).

This sequence belongs to the eukaryotic ribosomal protein P1/P2 family.

Its function is as follows. Plays an important role in the elongation step of protein synthesis. The protein is Large ribosomal subunit protein P2B (RPP2B) of Candida albicans (Yeast).